A 248-amino-acid polypeptide reads, in one-letter code: Tyrosine recombinase XerD-like (248 aa).

Positions 1-72 constitute a Core-binding (CB) domain; sequence MKSYIEPFIA…TANQFLYYLY (72 aa). The Tyr recombinase domain occupies 85–248; the sequence is DTMKVMRTEK…PVTLEKYYKS (164 aa). Residues Lys149 and Arg213 contribute to the active site. The O-(3'-phospho-DNA)-tyrosine intermediate role is filled by Tyr245.

The protein belongs to the 'phage' integrase family. XerD-like subfamily.

The protein resides in the cytoplasm. In terms of biological role, putative tyrosine recombinase. Not involved in the cutting and rejoining of the recombining DNA molecules on dif(SL) site. The polypeptide is Tyrosine recombinase XerD-like (Streptococcus pyogenes serotype M6 (strain ATCC BAA-946 / MGAS10394)).